A 118-amino-acid polypeptide reads, in one-letter code: Large ribosomal subunit protein bL20 (118 aa).

Belongs to the bacterial ribosomal protein bL20 family.

In terms of biological role, binds directly to 23S ribosomal RNA and is necessary for the in vitro assembly process of the 50S ribosomal subunit. It is not involved in the protein synthesizing functions of that subunit. The chain is Large ribosomal subunit protein bL20 (rplT) from Thermotoga maritima (strain ATCC 43589 / DSM 3109 / JCM 10099 / NBRC 100826 / MSB8).